A 301-amino-acid polypeptide reads, in one-letter code: Small ribosomal subunit protein uS2 (301 aa).

The segment at 237–301 is disordered; the sequence is PTESWNDTVV…QDWSNSTSQW (65 aa). The segment covering 264 to 278 has biased composition (low complexity); it reads PQYAPAPQAAAAPVA.

This sequence belongs to the universal ribosomal protein uS2 family. As to quaternary structure, component of the small ribosomal subunit. Mature ribosomes consist of a small (40S) and a large (60S) subunit. The 40S subunit contains about 33 different proteins and 1 molecule of RNA (18S). The 60S subunit contains about 49 different proteins and 3 molecules of RNA (28S, 5.8S and 5S). Interacts with ribosomal protein S21.

It localises to the cytoplasm. Functionally, required for the assembly and/or stability of the 40S ribosomal subunit. Required for the processing of the 20S rRNA-precursor to mature 18S rRNA in a late step of the maturation of 40S ribosomal subunits. In Diaphorina citri (Asian citrus psyllid), this protein is Small ribosomal subunit protein uS2.